A 127-amino-acid polypeptide reads, in one-letter code: Large ribosomal subunit protein bL17 (127 aa).

Belongs to the bacterial ribosomal protein bL17 family. Part of the 50S ribosomal subunit. Contacts protein L32.

This is Large ribosomal subunit protein bL17 from Salmonella paratyphi A (strain AKU_12601).